Reading from the N-terminus, the 407-residue chain is Probable sodium/metabolite cotransporter BASS5, chloroplastic (407 aa).

A chloroplast-targeting transit peptide spans 1–57; the sequence is MGVISPTETLFLKSQHRLLQPRNYSYALAFHSTRRVANFPRNSFSSLGSCSVDFPLR. A run of 9 helical transmembrane segments spans residues 101 to 121, 122 to 142, 162 to 184, 191 to 213, 222 to 242, 252 to 272, 286 to 306, 317 to 337, and 379 to 399; these read FIPHGILLSTILALVYPPSFT, WFKPRYFVPGLGFMMFAVGIN, YIGQYLIKPLLGYIFGVIAVSLF, GAGIMLVSCVSGAQLSNYTTFLT, IVMTSISTATAVLVTPMLSLL, VFGMISSILQVVITPIAAGLL, PFLPALTVIDMSCCIGAPLAL, ATILFLVITFHLLAFVAGYFF, and LVGVPPAISTVVMSLMGVSLV.

This sequence belongs to the bile acid:sodium symporter (BASS) (TC 2.A.28) family. In terms of tissue distribution, widely expressed.

It localises to the membrane. The protein localises to the plastid. It is found in the chloroplast envelope. Plastidic transporter involved in the biosynthesis of aliphatic glucosinolates by translocating the biosynthetic intermediates of Met-derived glucosinolates across chloroplast membranes. Transports short chain (C2) alpha-keto acids, such as 4-methylsulfanyl-2-oxobutanoic acid, from the cytosol to the chloroplast where they are subjected to chain elongation cycles. Also functions in the transport of chain-elongated (C3 to C8) Met derivatives from the chloroplast to the cytosol. Does not seem to be involved in the transport of indole-derived glucosinolates. In Arabidopsis thaliana (Mouse-ear cress), this protein is Probable sodium/metabolite cotransporter BASS5, chloroplastic (BASS5).